The chain runs to 134 residues: L-ectoine synthase (134 aa).

Belongs to the ectoine synthase family.

It carries out the reaction (2S)-4-acetamido-2-aminobutanoate = L-ectoine + H2O. It participates in amine and polyamine biosynthesis; ectoine biosynthesis; L-ectoine from L-aspartate 4-semialdehyde: step 3/3. Catalyzes the circularization of gamma-N-acetyl-alpha,gamma-diaminobutyric acid (ADABA) to ectoine (1,4,5,6-tetrahydro-2-methyl-4-pyrimidine carboxylic acid), which is an excellent osmoprotectant. The chain is L-ectoine synthase (ectC) from Sporosarcina pasteurii (Bacillus pasteurii).